Consider the following 330-residue polypeptide: DNA-directed RNA polymerase subunit alpha (330 aa).

The segment at 1–236 is alpha N-terminal domain (alpha-NTD); that stretch reads MQGSVTEFLK…EQLDAFVDLR (236 aa). The segment at 250 to 330 is alpha C-terminal domain (alpha-CTD); it reads FDPILLRPVD…NWPPASIAED (81 aa).

Belongs to the RNA polymerase alpha chain family. Homodimer. The RNAP catalytic core consists of 2 alpha, 1 beta, 1 beta' and 1 omega subunit. When a sigma factor is associated with the core the holoenzyme is formed, which can initiate transcription.

It carries out the reaction RNA(n) + a ribonucleoside 5'-triphosphate = RNA(n+1) + diphosphate. Functionally, DNA-dependent RNA polymerase catalyzes the transcription of DNA into RNA using the four ribonucleoside triphosphates as substrates. The chain is DNA-directed RNA polymerase subunit alpha from Vibrio parahaemolyticus serotype O3:K6 (strain RIMD 2210633).